The following is a 128-amino-acid chain: Glycine cleavage system H protein (128 aa).

A Lipoyl-binding domain is found at 22-104 (TVLVGITDYA…YGEGWIFRLK (83 aa)). N6-lipoyllysine is present on Lys-63.

This sequence belongs to the GcvH family. As to quaternary structure, the glycine cleavage system is composed of four proteins: P, T, L and H. Monomer. The cofactor is (R)-lipoate.

Functionally, the glycine cleavage system catalyzes the degradation of glycine. The H protein shuttles the methylamine group of glycine from the P protein to the T protein. The protein is Glycine cleavage system H protein of Thermus thermophilus (strain ATCC 27634 / DSM 579 / HB8).